Here is a 154-residue protein sequence, read N- to C-terminus: Mediator of RNA polymerase II transcription subunit 21 (154 aa).

Positions 37–71 are disordered; it reads GFERTGSQTPQQQVHQQQQLPQQQQQQQQPQQQED. The span at 44-71 shows a compositional bias: low complexity; the sequence is QTPQQQVHQQQQLPQQQQQQQQPQQQED. Residues 96 to 140 are a coiled coil; sequence SEESSIELQVQSLQRLEAENKESAEKLEEIVRKGELLLEKIQAAL.

Belongs to the Mediator complex subunit 21 family. In terms of assembly, component of the Mediator complex.

Its subcellular location is the nucleus. Functionally, component of the Mediator complex, a coactivator involved in the regulated transcription of nearly all RNA polymerase II-dependent genes. Mediator functions as a bridge to convey information from gene-specific regulatory proteins to the basal RNA polymerase II transcription machinery. Mediator is recruited to promoters by direct interactions with regulatory proteins and serves as a scaffold for the assembly of a functional preinitiation complex with RNA polymerase II and the general transcription factors. This chain is Mediator of RNA polymerase II transcription subunit 21 (MED21), found in Anopheles gambiae (African malaria mosquito).